A 384-amino-acid polypeptide reads, in one-letter code: Carbamoyl phosphate synthase small chain (384 aa).

A CPSase region spans residues 1–189 (MSKSALLVLE…GLPEAKDDSE (189 aa)). Positions 47, 241, and 243 each coordinate L-glutamine. Residues 193–380 (HVVAYDFGAK…IELIKLSVNE (188 aa)) form the Glutamine amidotransferase type-1 domain. Catalysis depends on Cys-269, which acts as the Nucleophile. Leu-270, Gln-273, Asn-311, Gly-313, and Phe-314 together coordinate L-glutamine. Residues His-353 and Glu-355 contribute to the active site.

The protein belongs to the CarA family. Composed of two chains; the small (or glutamine) chain promotes the hydrolysis of glutamine to ammonia, which is used by the large (or ammonia) chain to synthesize carbamoyl phosphate. Tetramer of heterodimers (alpha,beta)4.

The catalysed reaction is hydrogencarbonate + L-glutamine + 2 ATP + H2O = carbamoyl phosphate + L-glutamate + 2 ADP + phosphate + 2 H(+). It carries out the reaction L-glutamine + H2O = L-glutamate + NH4(+). It functions in the pathway amino-acid biosynthesis; L-arginine biosynthesis; carbamoyl phosphate from bicarbonate: step 1/1. The protein operates within pyrimidine metabolism; UMP biosynthesis via de novo pathway; (S)-dihydroorotate from bicarbonate: step 1/3. Its function is as follows. Small subunit of the glutamine-dependent carbamoyl phosphate synthetase (CPSase). CPSase catalyzes the formation of carbamoyl phosphate from the ammonia moiety of glutamine, carbonate, and phosphate donated by ATP, constituting the first step of 2 biosynthetic pathways, one leading to arginine and/or urea and the other to pyrimidine nucleotides. The small subunit (glutamine amidotransferase) binds and cleaves glutamine to supply the large subunit with the substrate ammonia. This chain is Carbamoyl phosphate synthase small chain, found in Photobacterium profundum (strain SS9).